Consider the following 138-residue polypeptide: uncharacterized protein (138 aa).

It to phage 186 CP81.

This is an uncharacterized protein from Salmonella typhimurium (strain LT2 / SGSC1412 / ATCC 700720).